The primary structure comprises 335 residues: Eukaryotic translation initiation factor 3 subunit I (335 aa).

WD repeat units lie at residues 8–47, 50–91, 145–184, 189–228, and 286–325; these read GHER…RLGT, GHQG…KVWD, CTES…QLEN, EFDN…ILKT, and GHFG…FDFM.

The protein belongs to the eIF-3 subunit I family. In terms of assembly, component of the eukaryotic translation initiation factor 3 (eIF-3) complex.

The protein localises to the cytoplasm. In terms of biological role, component of the eukaryotic translation initiation factor 3 (eIF-3) complex, which is involved in protein synthesis of a specialized repertoire of mRNAs and, together with other initiation factors, stimulates binding of mRNA and methionyl-tRNAi to the 40S ribosome. The eIF-3 complex specifically targets and initiates translation of a subset of mRNAs involved in cell proliferation. The polypeptide is Eukaryotic translation initiation factor 3 subunit I (tif34) (Aspergillus oryzae (strain ATCC 42149 / RIB 40) (Yellow koji mold)).